A 218-amino-acid chain; its full sequence is UPF0177 protein YaiF (218 aa).

Transmembrane regions (helical) follow at residues 8–28 (SIIIATAFFLFILSQLPAVFL), 48–68 (FIILTLVVVTICIFIGIKCGF), 81–101 (ILLIFSLLIITFFIQKFVVQF), 123–143 (ILSSLLFPGQFVAVSILAPIL), and 163–183 (FFLSCFFFSYVHSGFSWDILG).

The protein belongs to the UPF0177 family.

Its subcellular location is the cell membrane. This Lactococcus lactis subsp. lactis (strain IL1403) (Streptococcus lactis) protein is UPF0177 protein YaiF (yaiF).